The chain runs to 330 residues: MEDRLVGCRLSEEDVDEVSLRPRKFGEYIGQTKVKENLMVFIEAAKKRNEALDHVLLYGPPGLGKTTLAGIIASELGVNLRITSGPAIEKPGDLAAILTNLGNFDVLFIDEIHRLNRSVEEILYPAMEDYALDIIIGKGPSARSIRLDLPKFTLIGATTRAGLLTSPLRDRFGVINKLELYSVEELGQIVKRSARILNVGIEDEAAEEIARRARGTPRVANRILKRIRDFAQVKSDGFITKEIARTGLEALEVDEIGLDAVDRNLLMSIIEKFGGGPVGLDTLAATIGEEPDTIEDVYEPYLLQLGFINKTPRGRMATKLAYEHFGLKYE.

Positions 1–181 are large ATPase domain (RuvB-L); it reads MEDRLVGCRL…FGVINKLELY (181 aa). Residues Leu-20, Arg-21, Gly-62, Lys-65, Thr-66, Thr-67, 128–130, Arg-171, Tyr-181, and Arg-218 each bind ATP; that span reads EDY. Residue Thr-66 coordinates Mg(2+). Residues 182-252 are small ATPAse domain (RuvB-S); sequence SVEELGQIVK…IARTGLEALE (71 aa). Residues 255 to 330 are head domain (RuvB-H); it reads EIGLDAVDRN…AYEHFGLKYE (76 aa). DNA-binding residues include Lys-310 and Arg-315.

It belongs to the RuvB family. In terms of assembly, homohexamer. Forms an RuvA(8)-RuvB(12)-Holliday junction (HJ) complex. HJ DNA is sandwiched between 2 RuvA tetramers; dsDNA enters through RuvA and exits via RuvB. An RuvB hexamer assembles on each DNA strand where it exits the tetramer. Each RuvB hexamer is contacted by two RuvA subunits (via domain III) on 2 adjacent RuvB subunits; this complex drives branch migration. In the full resolvosome a probable DNA-RuvA(4)-RuvB(12)-RuvC(2) complex forms which resolves the HJ.

It is found in the cytoplasm. It carries out the reaction ATP + H2O = ADP + phosphate + H(+). The RuvA-RuvB-RuvC complex processes Holliday junction (HJ) DNA during genetic recombination and DNA repair, while the RuvA-RuvB complex plays an important role in the rescue of blocked DNA replication forks via replication fork reversal (RFR). RuvA specifically binds to HJ cruciform DNA, conferring on it an open structure. The RuvB hexamer acts as an ATP-dependent pump, pulling dsDNA into and through the RuvAB complex. RuvB forms 2 homohexamers on either side of HJ DNA bound by 1 or 2 RuvA tetramers; 4 subunits per hexamer contact DNA at a time. Coordinated motions by a converter formed by DNA-disengaged RuvB subunits stimulates ATP hydrolysis and nucleotide exchange. Immobilization of the converter enables RuvB to convert the ATP-contained energy into a lever motion, pulling 2 nucleotides of DNA out of the RuvA tetramer per ATP hydrolyzed, thus driving DNA branch migration. The RuvB motors rotate together with the DNA substrate, which together with the progressing nucleotide cycle form the mechanistic basis for DNA recombination by continuous HJ branch migration. Branch migration allows RuvC to scan DNA until it finds its consensus sequence, where it cleaves and resolves cruciform DNA. The chain is Holliday junction branch migration complex subunit RuvB from Acetivibrio thermocellus (strain ATCC 27405 / DSM 1237 / JCM 9322 / NBRC 103400 / NCIMB 10682 / NRRL B-4536 / VPI 7372) (Clostridium thermocellum).